Here is a 282-residue protein sequence, read N- to C-terminus: Bis(5'-nucleosyl)-tetraphosphatase, symmetrical (282 aa).

The protein belongs to the Ap4A hydrolase family.

The catalysed reaction is P(1),P(4)-bis(5'-adenosyl) tetraphosphate + H2O = 2 ADP + 2 H(+). Its function is as follows. Hydrolyzes diadenosine 5',5'''-P1,P4-tetraphosphate to yield ADP. The chain is Bis(5'-nucleosyl)-tetraphosphatase, symmetrical from Citrobacter koseri (strain ATCC BAA-895 / CDC 4225-83 / SGSC4696).